The chain runs to 722 residues: Dynein axonemal intermediate chain 7 (722 aa).

Residues 1–15 (MGPKAKKSGSKKKKV) show a composition bias toward basic residues. The segment at 1-20 (MGPKAKKSGSKKKKVTKAER) is disordered.

It belongs to the DNAI7 family. In terms of assembly, part of the multisubunit axonemal dynein complex formed at least of two heavy chains and a number of intermediate and light chains. Associates with tubulin. Interacts with microtubule. Ubiquitinated. Ubiquitination leads to its degradation through the 26S proteasome. Ubiquitin-proteasome-mediated DNAI7 degradation occurs in mitosis.

The protein localises to the cell projection. It localises to the cilium. Its subcellular location is the cytoplasm. Via its association with the multisubunit axonemal dynein complex, is potentially involved in the regulation of cilia function. May act as a cell cycle regulator. This chain is Dynein axonemal intermediate chain 7, found in Macaca fascicularis (Crab-eating macaque).